The chain runs to 491 residues: UDP-N-acetylmuramate--L-alanine ligase (491 aa).

An ATP-binding site is contributed by 126–132 (GTHGKTT).

This sequence belongs to the MurCDEF family.

Its subcellular location is the cytoplasm. It carries out the reaction UDP-N-acetyl-alpha-D-muramate + L-alanine + ATP = UDP-N-acetyl-alpha-D-muramoyl-L-alanine + ADP + phosphate + H(+). It participates in cell wall biogenesis; peptidoglycan biosynthesis. Functionally, cell wall formation. This chain is UDP-N-acetylmuramate--L-alanine ligase, found in Klebsiella pneumoniae subsp. pneumoniae (strain ATCC 700721 / MGH 78578).